Consider the following 213-residue polypeptide: Holliday junction resolvase RecU (213 aa).

Positions 98, 100, 113, and 132 each coordinate Mg(2+).

It belongs to the RecU family. Requires Mg(2+) as cofactor.

The protein resides in the cytoplasm. It carries out the reaction Endonucleolytic cleavage at a junction such as a reciprocal single-stranded crossover between two homologous DNA duplexes (Holliday junction).. Its function is as follows. Endonuclease that resolves Holliday junction intermediates in genetic recombination. Cleaves mobile four-strand junctions by introducing symmetrical nicks in paired strands. Promotes annealing of linear ssDNA with homologous dsDNA. Required for DNA repair, homologous recombination and chromosome segregation. This chain is Holliday junction resolvase RecU, found in Ligilactobacillus salivarius (strain UCC118) (Lactobacillus salivarius).